We begin with the raw amino-acid sequence, 427 residues long: MAVSPHISPTLSRYKFFSTSVVENPNFSPYRIYSRRRVTKSHLQAHNSTTSYGRTELSSSKKLWIRQRSFSEMEVEQAQLEDDEEQVEIDIVDEASLLSLSMKPDRNMALLDDYEMEELGHTPNTHHRSGYVAVVGMPNVGKSTLSNQMIGQKISIVTDKPQTTRHRILGICSSPEYQMILYDTPGVIEKKMHRLDTMMMKNVRDAAINADCVVILVDACKTPTNIEEVLKEGLGDLEKKPPMLLVMNKKDLIKPGEIAKKLEWYEKFTDVDEVIPVSAKYGHGIEDVKEWILSKLPFGPPYYPKDIVSEHPERFFVSEIVREKIFMQYRNEVPYACQVNVLSYKTRPAAKDFIQVEVVVDKNSQKIILIGKEGKALKTLATAARLDIEDFLQKKVFLEVEVKVKENWRQDEGLLKYYGYGGQIRAM.

The N-terminal 39 residues, 1 to 39 (MAVSPHISPTLSRYKFFSTSVVENPNFSPYRIYSRRRVT), are a transit peptide targeting the chloroplast. The region spanning 128-298 (RSGYVAVVGM…KEWILSKLPF (171 aa)) is the Era-type G domain. The segment at 136–143 (GMPNVGKS) is G1. Residue 136-143 (GMPNVGKS) coordinates GTP. The segment at 162–166 (QTTRH) is G2. The G3 stretch occupies residues 183 to 186 (DTPG). GTP is bound by residues 183–187 (DTPGV) and 248–251 (NKKD). The tract at residues 248–251 (NKKD) is G4. Positions 277–279 (VSA) are G5. The KH type-2 domain maps to 329–406 (YRNEVPYACQ…FLEVEVKVKE (78 aa)).

It belongs to the TRAFAC class TrmE-Era-EngA-EngB-Septin-like GTPase superfamily. Era GTPase family.

The protein resides in the plastid. It localises to the chloroplast stroma. It is found in the chloroplast nucleoid. Its function is as follows. Nuclear genome-encoded probable GTPase involved in ribosome biogenesis in chloroplasts. Plays a role in 16S rRNA maturation in plastids and may contribute to the assembly of the small (30S) ribosomal subunit. The protein is GTPase ERA-like, chloroplastic of Arabidopsis thaliana (Mouse-ear cress).